The primary structure comprises 77 residues: Serine protease inhibitor 1 (77 aa).

Residues 1–17 form the signal peptide; that stretch reads MMFTPLIVLTLLVLATA. Intrachain disulfides connect Cys21–Cys53, Cys30–Cys48, Cys33–Cys44, Cys37–Cys74, and Cys55–Cys68. The TIL domain maps to 21-74; sequence CGPNEQWSDCPGCELQCGESDKPCPAMCGDPKCYCSPDQYRRIPDGRCIRKIQC.

The protein resides in the secreted. Defends the organism against the host's proteinases. The sequence is that of Serine protease inhibitor 1 from Anisakis simplex (Herring worm).